The chain runs to 243 residues: Vimentin A2 (243 aa).

The interval 1 to 22 (GFSLQDELDFLKKLHDEELADV) is coil 1B. Residues 1 to 188 (GFSLQDELDF…KLLEGEESRI (188 aa)) enclose the IF rod domain. The linker 12 stretch occupies residues 23-45 (QAQIQDQQVQVDMDMAKPDLTAA). A coil 2 region spans residues 46-184 (LRDVRLQYEN…ATYRKLLEGE (139 aa)). Positions 185–243 (ESRITTPLPNLSSFNLRDAILETKPILENTFSKKVLIKTIETRDGEVINESTQNHDDLE) are tail.

Belongs to the intermediate filament family. As to quaternary structure, homomer. One of the most prominent phosphoproteins in various cells of mesenchymal origin. Phosphorylation is enhanced during cell division, at which time vimentin filaments are significantly reorganized. Expressed in low amounts in retina, optic nerve, and brain and in higher amounts in spinal cord.

Functionally, vimentins are class-III intermediate filaments found in various non-epithelial cells, especially mesenchymal cells. Vimentin is attached to the nucleus, endoplasmic reticulum, and mitochondria, either laterally or terminally. This is Vimentin A2 from Carassius auratus (Goldfish).